The following is a 1045-amino-acid chain: FERM, ARHGEF and pleckstrin domain-containing protein 1 (1045 aa).

A disordered region spans residues 1–37; the sequence is MGEIEQRPTPGSRLGAPENSGISTLERGQKPPPTPSG. Residues Ser20 and Ser23 each carry the phosphoserine modification. Thr24 bears the Phosphothreonine mark. Positions 40-320 constitute an FERM domain; that stretch reads VSIKIQMLDD…EHHAFFRLFE (281 aa). Residues Ser340, Ser373, Ser389, Ser403, Ser418, Ser427, and Ser433 each carry the phosphoserine modification. Residues 361 to 534 form a disordered region; sequence FERKHSKIHS…TDDEDEGRRK (174 aa). Over residues 373 to 396 the composition is skewed to polar residues; that stretch reads SLASQPTELNSEVLEQSQQSTSLT. Composition is skewed to polar residues over residues 471–489 and 496–511; these read TGSLTGSPHLSELSVNSQG and VTLSPNLSPDTKQASP. Phosphoserine occurs at positions 510 and 514. Residues 540–730 enclose the DH domain; the sequence is KAYFIAKEVS…TEMVAQLHGT (191 aa). The region spanning 759–856 is the PH 1 domain; the sequence is EFIRLGSLSK…WVEDIQMAID (98 aa). 3 positions are modified to phosphoserine: Ser833, Ser872, and Ser878. Residues 864 to 903 form a disordered region; sequence PAPEFLASSPPDNKSPDEATAADQESEDDLSASRTSLERQ. Phosphothreonine is present on Thr883. Phosphoserine is present on residues Ser889, Ser896, and Ser899. One can recognise a PH 2 domain in the interval 932-1029; the sequence is ENQLSGNLLR…WMEVIRSATS (98 aa).

In terms of assembly, interacts with CADM1. Interacts with RAC1. In terms of tissue distribution, detected in cAMP-treated chondrocytes, but not in untreated chondrocytes. Detected in fetal brain, heart and spleen, and in adult testis, kidney and lung.

The protein resides in the cell membrane. It is found in the synapse. The protein localises to the synaptosome. It localises to the cytoplasm. Its subcellular location is the cytosol. The protein resides in the cell projection. It is found in the filopodium. The protein localises to the dendrite. It localises to the dendritic spine. Its function is as follows. Functions as a guanine nucleotide exchange factor for RAC1. May play a role in semaphorin signaling. Plays a role in the assembly and disassembly of dendritic filopodia, the formation of dendritic spines, regulation of dendrite length and ultimately the formation of synapses. This Homo sapiens (Human) protein is FERM, ARHGEF and pleckstrin domain-containing protein 1 (FARP1).